We begin with the raw amino-acid sequence, 136 residues long: Large ribosomal subunit protein bL17 (136 aa).

Belongs to the bacterial ribosomal protein bL17 family. Part of the 50S ribosomal subunit. Contacts protein L32.

The chain is Large ribosomal subunit protein bL17 from Rickettsia peacockii (strain Rustic).